Consider the following 393-residue polypeptide: DNA primase large subunit PriL (393 aa).

The [4Fe-4S] cluster site is built by Cys230, Cys339, Cys350, and Cys356.

The protein belongs to the eukaryotic-type primase large subunit family. In terms of assembly, heterodimer of a small subunit (PriS) and a large subunit (PriL). It depends on [4Fe-4S] cluster as a cofactor.

Its function is as follows. Regulatory subunit of DNA primase, an RNA polymerase that catalyzes the synthesis of short RNA molecules used as primers for DNA polymerase during DNA replication. Stabilizes and modulates the activity of the small subunit, increasing the rate of DNA synthesis, and conferring RNA synthesis capability. The DNA polymerase activity may enable DNA primase to also catalyze primer extension after primer synthesis. May also play a role in DNA repair. Displays gap-filling and strand-displacement activities. The chain is DNA primase large subunit PriL from Pyrococcus abyssi (strain GE5 / Orsay).